The chain runs to 454 residues: Chromosomal replication initiator protein DnaA (454 aa).

Residues 1-83 (MTEKEHFFWN…IKVEYVFDEA (83 aa)) are domain I, interacts with DnaA modulators. Positions 83–113 (ALVSETKPTLANNDFSNKREQQTPDLPTLNS) are domain II. The tract at residues 114 to 332 (DLNSKYTFDN…GALKDISLVA (219 aa)) is domain III, AAA+ region. ATP contacts are provided by Gly158, Gly160, Lys161, and Thr162. The interval 333 to 454 (NVRQLDTITV…EIDTIKNKIK (122 aa)) is domain IV, binds dsDNA.

It belongs to the DnaA family. As to quaternary structure, oligomerizes as a right-handed, spiral filament on DNA at oriC.

The protein localises to the cytoplasm. Its function is as follows. Plays an essential role in the initiation and regulation of chromosomal replication. ATP-DnaA binds to the origin of replication (oriC) to initiate formation of the DNA replication initiation complex once per cell cycle. Binds the DnaA box (a 9 base pair repeat at the origin) and separates the double-stranded (ds)DNA. Forms a right-handed helical filament on oriC DNA; dsDNA binds to the exterior of the filament while single-stranded (ss)DNA is stabiized in the filament's interior. The ATP-DnaA-oriC complex binds and stabilizes one strand of the AT-rich DNA unwinding element (DUE), permitting loading of DNA polymerase. After initiation quickly degrades to an ADP-DnaA complex that is not apt for DNA replication. Binds acidic phospholipids. The chain is Chromosomal replication initiator protein DnaA from Streptococcus thermophilus (strain ATCC BAA-250 / LMG 18311).